A 373-amino-acid chain; its full sequence is Putative gustatory receptor 10b (373 aa).

At 1-8 (MRVGKLCR) the chain is on the cytoplasmic side. Residues 9–29 (LALRFWMGLILVLGFSSHYYN) form a helical membrane-spanning segment. Residues 30–82 (PTRRRLVYSRILQTYDWLLMVINLGAFYLYYRYAMTYFLEGMFRRQGFVNQVS) are Extracellular-facing. Residues 83–103 (TCNVFQQLLMAVTGTWLHFLF) traverse the membrane as a helical segment. Residues 104 to 132 (ERHVCQTYNELSRILKHDLKLKEHSRFYC) lie on the Cytoplasmic side of the membrane. A helical transmembrane segment spans residues 133–153 (LAFLAKVYNFFHNFNFALSAI). Residues 154–170 (MHWGLRPFNVWDLLANL) are Extracellular-facing. Residues 171–191 (YFVYNSLARDAILVAYVLLLL) form a helical membrane-spanning segment. Residues 192–230 (NLSEALRLNGQQEHDTYSDLMKQLRRRERLLRIGRRVHR) lie on the Cytoplasmic side of the membrane. The helical transmembrane segment at 231–251 (MFAWLVAIALIYLVFFNTATI) threads the bilayer. Residues 252–273 (YLGYTMFIQKHDALGLRGRGLK) lie on the Extracellular side of the membrane. Residues 274-294 (MLLTVVSFLVILWDVVLLQVI) traverse the membrane as a helical segment. Topologically, residues 295 to 350 (CEKLLAEENKICDCPEDVASSRTTYRQWEMSALRRAITRSSPENNVLGMFRMDMRC) are cytoplasmic. The chain crosses the membrane as a helical span at residues 351 to 371 (AFALISCSLSYGIIIIQIGYI). Topologically, residues 372 to 373 (PG) are extracellular.

The protein belongs to the insect chemoreceptor superfamily. Gustatory receptor (GR) family. Gr10a subfamily.

It is found in the cell membrane. Its function is as follows. Probable gustatory receptor which mediates acceptance or avoidance behavior, depending on its substrates. In Drosophila melanogaster (Fruit fly), this protein is Putative gustatory receptor 10b (Gr10b).